A 245-amino-acid chain; its full sequence is Adenosylcobinamide-GDP ribazoletransferase (245 aa).

5 helical membrane-spanning segments follow: residues 31-51, 61-81, 113-133, 138-158, and 192-212; these read FGRA…VLYA, PLLQ…ALHL, VAVV…AALL, AGLL…LFLT, and LAFG…FAWL.

Belongs to the CobS family. Requires Mg(2+) as cofactor.

The protein resides in the cell inner membrane. The enzyme catalyses alpha-ribazole + adenosylcob(III)inamide-GDP = adenosylcob(III)alamin + GMP + H(+). It carries out the reaction alpha-ribazole 5'-phosphate + adenosylcob(III)inamide-GDP = adenosylcob(III)alamin 5'-phosphate + GMP + H(+). The protein operates within cofactor biosynthesis; adenosylcobalamin biosynthesis; adenosylcobalamin from cob(II)yrinate a,c-diamide: step 7/7. Its function is as follows. Joins adenosylcobinamide-GDP and alpha-ribazole to generate adenosylcobalamin (Ado-cobalamin). Also synthesizes adenosylcobalamin 5'-phosphate from adenosylcobinamide-GDP and alpha-ribazole 5'-phosphate. In Pseudomonas aeruginosa (strain ATCC 15692 / DSM 22644 / CIP 104116 / JCM 14847 / LMG 12228 / 1C / PRS 101 / PAO1), this protein is Adenosylcobinamide-GDP ribazoletransferase.